Reading from the N-terminus, the 260-residue chain is DNA repair protein RecO (260 aa).

The protein belongs to the RecO family.

Involved in DNA repair and RecF pathway recombination. The sequence is that of DNA repair protein RecO from Salinibacter ruber (strain DSM 13855 / M31).